We begin with the raw amino-acid sequence, 219 residues long: MSRISKAEMSKLLSVYFIMGSNNCTKDPLQVLREALEGGITIFQFREKGEGALTGEERICFAKELQAICKEYGVPFIVNDDVELALELDADGVHVGQDDEGITSVREKMGDKIVGVSTHTIEEARWAIENGADYLGVGPIFPTSTKKDTKAVQGTKGLAHFREQGITIPIVGIGGISIENTASVIEAGADGVSVISAISLAESAYESTKKLVEEVSRSL.

4-amino-2-methyl-5-(diphosphooxymethyl)pyrimidine is bound by residues glutamine 44–lysine 48 and asparagine 79. Residues aspartate 80 and aspartate 99 each contribute to the Mg(2+) site. Residue serine 117 coordinates 4-amino-2-methyl-5-(diphosphooxymethyl)pyrimidine. Threonine 143–threonine 145 is a 2-[(2R,5Z)-2-carboxy-4-methylthiazol-5(2H)-ylidene]ethyl phosphate binding site. Residue lysine 146 participates in 4-amino-2-methyl-5-(diphosphooxymethyl)pyrimidine binding. Residues glycine 175 and isoleucine 195 to serine 196 contribute to the 2-[(2R,5Z)-2-carboxy-4-methylthiazol-5(2H)-ylidene]ethyl phosphate site.

It belongs to the thiamine-phosphate synthase family. It depends on Mg(2+) as a cofactor.

It catalyses the reaction 2-[(2R,5Z)-2-carboxy-4-methylthiazol-5(2H)-ylidene]ethyl phosphate + 4-amino-2-methyl-5-(diphosphooxymethyl)pyrimidine + 2 H(+) = thiamine phosphate + CO2 + diphosphate. The catalysed reaction is 2-(2-carboxy-4-methylthiazol-5-yl)ethyl phosphate + 4-amino-2-methyl-5-(diphosphooxymethyl)pyrimidine + 2 H(+) = thiamine phosphate + CO2 + diphosphate. It carries out the reaction 4-methyl-5-(2-phosphooxyethyl)-thiazole + 4-amino-2-methyl-5-(diphosphooxymethyl)pyrimidine + H(+) = thiamine phosphate + diphosphate. It functions in the pathway cofactor biosynthesis; thiamine diphosphate biosynthesis; thiamine phosphate from 4-amino-2-methyl-5-diphosphomethylpyrimidine and 4-methyl-5-(2-phosphoethyl)-thiazole: step 1/1. In terms of biological role, condenses 4-methyl-5-(beta-hydroxyethyl)thiazole monophosphate (THZ-P) and 2-methyl-4-amino-5-hydroxymethyl pyrimidine pyrophosphate (HMP-PP) to form thiamine monophosphate (TMP). This chain is Thiamine-phosphate synthase, found in Bacillus cereus (strain AH820).